Consider the following 175-residue polypeptide: MNCPYCSHPDSKVIDSRDVDDGVRRRRECVVCGQRFTTYERFQPAGLFVVKKDQRREEFNKEKLLSGLRRACEKRPLPAGAVDKVAGDIEAELYNMGKAEIPSTLLGDMVMERLKMLDNIAYVRFASVYREFTDITQLKKVVDNLVNGQDEGIHKGQLSLLPEDKAAPKTRYQRR.

Residues 3 to 32 (CPYCSHPDSKVIDSRDVDDGVRRRRECVVC) fold into a zinc finger. The ATP-cone domain occupies 47-137 (LFVVKKDQRR…VYREFTDITQ (91 aa)).

The protein belongs to the NrdR family. Zn(2+) serves as cofactor.

Its function is as follows. Negatively regulates transcription of bacterial ribonucleotide reductase nrd genes and operons by binding to NrdR-boxes. The protein is Transcriptional repressor NrdR of Dehalococcoides mccartyi (strain ATCC BAA-2100 / JCM 16839 / KCTC 5957 / BAV1).